The following is a 130-amino-acid chain: Ribosome-binding factor A (130 aa).

The segment at 111–130 (RDLDDVGPEATSSDEDAEQR) is disordered.

The protein belongs to the RbfA family. In terms of assembly, monomer. Binds 30S ribosomal subunits, but not 50S ribosomal subunits or 70S ribosomes.

It localises to the cytoplasm. Functionally, one of several proteins that assist in the late maturation steps of the functional core of the 30S ribosomal subunit. Associates with free 30S ribosomal subunits (but not with 30S subunits that are part of 70S ribosomes or polysomes). Required for efficient processing of 16S rRNA. May interact with the 5'-terminal helix region of 16S rRNA. This Xanthomonas euvesicatoria pv. vesicatoria (strain 85-10) (Xanthomonas campestris pv. vesicatoria) protein is Ribosome-binding factor A.